The sequence spans 228 residues: Cytidylate kinase (228 aa).

7–15 (GPVATGKST) contributes to the ATP binding site.

It belongs to the cytidylate kinase family. Type 1 subfamily.

It localises to the cytoplasm. It carries out the reaction CMP + ATP = CDP + ADP. The enzyme catalyses dCMP + ATP = dCDP + ADP. This chain is Cytidylate kinase, found in Protochlamydia amoebophila (strain UWE25).